We begin with the raw amino-acid sequence, 359 residues long: NADH-quinone oxidoreductase subunit H (359 aa).

8 helical membrane passes run 16 to 36 (IWPA…CVLL), 94 to 114 (GLFV…WAVI), 129 to 149 (LLFL…AGWA), 167 to 187 (VSYE…SASL), 208 to 228 (FLSW…ISGL), 261 to 281 (FFLA…ILFL), 296 to 316 (IPGW…FLWV), and 331 to 351 (LGWK…GAWM).

Belongs to the complex I subunit 1 family. As to quaternary structure, NDH-1 is composed of 14 different subunits. Subunits NuoA, H, J, K, L, M, N constitute the membrane sector of the complex.

It is found in the cell inner membrane. It carries out the reaction a quinone + NADH + 5 H(+)(in) = a quinol + NAD(+) + 4 H(+)(out). NDH-1 shuttles electrons from NADH, via FMN and iron-sulfur (Fe-S) centers, to quinones in the respiratory chain. The immediate electron acceptor for the enzyme in this species is believed to be ubiquinone. Couples the redox reaction to proton translocation (for every two electrons transferred, four hydrogen ions are translocated across the cytoplasmic membrane), and thus conserves the redox energy in a proton gradient. This subunit may bind ubiquinone. The protein is NADH-quinone oxidoreductase subunit H of Polaromonas sp. (strain JS666 / ATCC BAA-500).